The primary structure comprises 116 residues: Large ribosomal subunit protein bL19 (116 aa).

This sequence belongs to the bacterial ribosomal protein bL19 family.

In terms of biological role, this protein is located at the 30S-50S ribosomal subunit interface and may play a role in the structure and function of the aminoacyl-tRNA binding site. This Pseudomonas entomophila (strain L48) protein is Large ribosomal subunit protein bL19.